Consider the following 160-residue polypeptide: SsrA-binding protein (160 aa).

Belongs to the SmpB family.

The protein resides in the cytoplasm. In terms of biological role, required for rescue of stalled ribosomes mediated by trans-translation. Binds to transfer-messenger RNA (tmRNA), required for stable association of tmRNA with ribosomes. tmRNA and SmpB together mimic tRNA shape, replacing the anticodon stem-loop with SmpB. tmRNA is encoded by the ssrA gene; the 2 termini fold to resemble tRNA(Ala) and it encodes a 'tag peptide', a short internal open reading frame. During trans-translation Ala-aminoacylated tmRNA acts like a tRNA, entering the A-site of stalled ribosomes, displacing the stalled mRNA. The ribosome then switches to translate the ORF on the tmRNA; the nascent peptide is terminated with the 'tag peptide' encoded by the tmRNA and targeted for degradation. The ribosome is freed to recommence translation, which seems to be the essential function of trans-translation. The chain is SsrA-binding protein from Yersinia pseudotuberculosis serotype O:1b (strain IP 31758).